The sequence spans 305 residues: Guanine nucleotide-binding protein subunit beta (305 aa).

WD repeat units follow at residues 19–49, 61–91, 104–133, 145–176, 188–218, 231–260, and 272–302; these read NKLG…LVWD, APSV…VVYD, GHAG…MFWD, GHEM…KLWD, GNTS…RCFD, PSSS…EVWD, and GHEN…RLWS.

This sequence belongs to the WD repeat G protein beta family. In terms of assembly, g proteins are composed of 3 units, alpha, beta and gamma. Binding of the beta-gamma subunit complex (git5-git11) to the alpha subunit (gpa2) facilitates interaction with GPCR git3.

It is found in the cell membrane. The protein resides in the cytoplasm. It localises to the nucleus. In terms of biological role, beta subunit of the heterotrimeric guanine nucleotide-binding protein (G protein) involved in glucose-induced cAMP signaling. The beta-gamma subunits (git5-git11) promote binding of the alpha subunit gpa2 to GPCR git3, which senses extracellular glucose, to activate cAMP-PKA signaling and repress sexual development and gluconeogenesis. The polypeptide is Guanine nucleotide-binding protein subunit beta (git5) (Schizosaccharomyces pombe (strain 972 / ATCC 24843) (Fission yeast)).